Here is a 312-residue protein sequence, read N- to C-terminus: Ribosomal protein L11 methyltransferase (312 aa).

S-adenosyl-L-methionine-binding residues include Thr-162, Gly-183, Asp-205, and Asn-248.

Belongs to the methyltransferase superfamily. PrmA family.

It localises to the cytoplasm. It carries out the reaction L-lysyl-[protein] + 3 S-adenosyl-L-methionine = N(6),N(6),N(6)-trimethyl-L-lysyl-[protein] + 3 S-adenosyl-L-homocysteine + 3 H(+). In terms of biological role, methylates ribosomal protein L11. The sequence is that of Ribosomal protein L11 methyltransferase from Bacillus cereus (strain G9842).